The chain runs to 372 residues: 3-dehydroquinate synthase (372 aa).

NAD(+) is bound by residues 113–117 (GVIGD), 137–138 (TS), Lys150, Lys159, and 177–180 (TLKT). Residues Glu192, His257, and His274 each contribute to the Zn(2+) site.

The protein belongs to the sugar phosphate cyclases superfamily. Dehydroquinate synthase family. Co(2+) serves as cofactor. Zn(2+) is required as a cofactor. The cofactor is NAD(+).

It localises to the cytoplasm. The enzyme catalyses 7-phospho-2-dehydro-3-deoxy-D-arabino-heptonate = 3-dehydroquinate + phosphate. It functions in the pathway metabolic intermediate biosynthesis; chorismate biosynthesis; chorismate from D-erythrose 4-phosphate and phosphoenolpyruvate: step 2/7. In terms of biological role, catalyzes the conversion of 3-deoxy-D-arabino-heptulosonate 7-phosphate (DAHP) to dehydroquinate (DHQ). The chain is 3-dehydroquinate synthase from Acaryochloris marina (strain MBIC 11017).